The primary structure comprises 617 residues: Chaperone protein HscA homolog (617 aa).

The protein belongs to the heat shock protein 70 family.

Chaperone involved in the maturation of iron-sulfur cluster-containing proteins. Has a low intrinsic ATPase activity which is markedly stimulated by HscB. The polypeptide is Chaperone protein HscA homolog (Aliivibrio salmonicida (strain LFI1238) (Vibrio salmonicida (strain LFI1238))).